Reading from the N-terminus, the 286-residue chain is Probable glucose uptake protein GlcU (286 aa).

10 helical membrane passes run 4–21, 28–50, 54–71, 84–106, 116–135, 154–176, 181–198, 211–228, 233–255, and 262–284; these read FLAV…LFNV, YSQT…IFVH, TPLI…WAVG, VSKT…GVIV, IILG…LASL, IVIL…LFNV, ALLP…LLTF, IIPG…FISQ, VATS…IIIL, and RQLV…LGLA.

This sequence belongs to the GRP transporter (TC 2.A.7.5) family.

Its subcellular location is the cell membrane. Involved in the uptake of glucose. This is Probable glucose uptake protein GlcU (glcU) from Priestia megaterium (Bacillus megaterium).